A 335-amino-acid polypeptide reads, in one-letter code: MTIDTNPESSTPSAPAYNPSEKQKGSAKTIRIPIKVVPMERLPKPDWIRVKAGSPSTRFYEIKDILRANNLVTVCEEASCPNIGECFGKGTATFMIMGDKCTRRCPFCDVGHGRPDPLDVNEPENLAKTIAALRLNYVVITSVDRDDLRDGGAGHFAECIRRVRELSPNTRIEILVPDFRGRMDRALEILNLAPPDVMNHNLETAPRLYKEARPGSDYAYSLNLLKRFKALHPNTPTKSGIMVGLGETDEEVLQVMRDMRAHDVDMLTIGQYLMPSGDHLPVRRYVHPDTFKMYEEEAYKMGFAHAAVGAMVRSSYHADQQAHGVTAGASQLPHD.

Over residues 1–13 (MTIDTNPESSTPS) the composition is skewed to polar residues. Residues 1–29 (MTIDTNPESSTPSAPAYNPSEKQKGSAKT) form a disordered region. Cysteine 75, cysteine 80, cysteine 86, cysteine 101, cysteine 105, cysteine 108, and serine 315 together coordinate [4Fe-4S] cluster. Residues 86–304 (CFGKGTATFM…EEEAYKMGFA (219 aa)) enclose the Radical SAM core domain.

Belongs to the radical SAM superfamily. Lipoyl synthase family. [4Fe-4S] cluster is required as a cofactor.

The protein resides in the cytoplasm. The catalysed reaction is [[Fe-S] cluster scaffold protein carrying a second [4Fe-4S](2+) cluster] + N(6)-octanoyl-L-lysyl-[protein] + 2 oxidized [2Fe-2S]-[ferredoxin] + 2 S-adenosyl-L-methionine + 4 H(+) = [[Fe-S] cluster scaffold protein] + N(6)-[(R)-dihydrolipoyl]-L-lysyl-[protein] + 4 Fe(3+) + 2 hydrogen sulfide + 2 5'-deoxyadenosine + 2 L-methionine + 2 reduced [2Fe-2S]-[ferredoxin]. Its pathway is protein modification; protein lipoylation via endogenous pathway; protein N(6)-(lipoyl)lysine from octanoyl-[acyl-carrier-protein]: step 2/2. In terms of biological role, catalyzes the radical-mediated insertion of two sulfur atoms into the C-6 and C-8 positions of the octanoyl moiety bound to the lipoyl domains of lipoate-dependent enzymes, thereby converting the octanoylated domains into lipoylated derivatives. This is Lipoyl synthase from Herminiimonas arsenicoxydans.